A 76-amino-acid chain; its full sequence is Omega-conotoxin-like TxMKLT1-0211 (76 aa).

Positions 1–22 (MKLTCMMIVAVLFLTAWTFVTA) are cleaved as a signal peptide. Residues 23–52 (VPHSSNALENLYLKAHHEMNNPEDSELNKR) constitute a propeptide that is removed on maturation. 3 disulfides stabilise this stretch: cysteine 53-cysteine 67, cysteine 60-cysteine 71, and cysteine 66-cysteine 75.

This sequence belongs to the conotoxin O1 superfamily. Expressed by the venom duct.

It is found in the secreted. In terms of biological role, omega-conotoxins act at presynaptic membranes, they bind and block voltage-gated calcium channels (Cav). This is Omega-conotoxin-like TxMKLT1-0211 from Conus textile (Cloth-of-gold cone).